The sequence spans 849 residues: Aminopeptidase N (849 aa).

Substrate contacts are provided by residues Glu122 and Gly259–Asn263. His294 contacts Zn(2+). Glu295 functions as the Proton acceptor in the catalytic mechanism. His298 and Glu317 together coordinate Zn(2+).

Belongs to the peptidase M1 family. In terms of assembly, monomer. It depends on Zn(2+) as a cofactor.

The protein resides in the cytoplasm. The catalysed reaction is Release of an N-terminal amino acid, Xaa-|-Yaa- from a peptide, amide or arylamide. Xaa is preferably Ala, but may be most amino acids including Pro (slow action). When a terminal hydrophobic residue is followed by a prolyl residue, the two may be released as an intact Xaa-Pro dipeptide.. Aminopeptidase with broad substrate specificity to several peptides. It has more affinity for oligopeptides than for dipeptides. It plays an essential role in the metabolism, it may be involved in nitrogen supply or protein turnover. The chain is Aminopeptidase N (pepN) from Lactococcus lactis subsp. lactis (Streptococcus lactis).